Here is a 121-residue protein sequence, read N- to C-terminus: Probable K(+)/H(+) antiporter subunit G (121 aa).

3 helical membrane passes run 10 to 32 (WAALLVCGLMLVGAATTLIGSLG), 45 to 67 (APTIATSGGTILLCLASILCFAV), and 72 to 94 (WVFHEVLIIFFVTVTTPVTLMLL).

Belongs to the CPA3 antiporters (TC 2.A.63) subunit G family. May form a hetero-oligomeric complex that consists of six subunits: PhaAB, PhaC, PhaD, PhaE, PhaF and PhaG.

The protein localises to the cell membrane. Functionally, part of a K(+) efflux system which is required for the adaptation of R.meliloti to alkaline pH as well as for the infection process during symbiotic nodule development. In Rhizobium meliloti (strain 1021) (Ensifer meliloti), this protein is Probable K(+)/H(+) antiporter subunit G (phaG).